A 530-amino-acid polypeptide reads, in one-letter code: Purine-cytosine permease FCY22 (530 aa).

Position 46 is a phosphothreonine (T46). Transmembrane regions (helical) follow at residues 96-116 (MVIV…LNFG), 119-139 (VLVI…FSLF), 162-182 (FFSL…ISVS), 197-217 (CPIW…TFFG), 220-240 (VVHA…LVII), 263-283 (GVLS…TYAA), 298-318 (IFFS…ILGA), 345-365 (AILV…LLAL), 372-392 (VPGM…LAKI), 396-416 (VWTM…TYYF), 418-438 (GFME…IAIA), and 463-483 (LPIG…VALG).

It belongs to the purine-cytosine permease (2.A.39) family.

The protein resides in the membrane. Probable purine-cytosine permease. This chain is Purine-cytosine permease FCY22 (FCY22), found in Saccharomyces cerevisiae (strain ATCC 204508 / S288c) (Baker's yeast).